A 449-amino-acid chain; its full sequence is Streptomycin-6-phosphate phosphatase (449 aa).

A signal peptide spans 1–32 (MRFAYGRLPWRRGAVLGSALLVLVTAPAASTA). Asp-50 serves as a coordination point for Mg(2+). Asp-50 contacts Zn(2+). The Phosphoserine intermediate role is filled by Ser-99. Residues Asp-151 and Thr-153 each coordinate Mg(2+). The tract at residues 268 to 290 (APGGTAPQRCATRNPGRPAGTPD) is disordered. Glu-321 is a Mg(2+) binding site. Residues Asp-326, His-330, Asp-368, His-369, and His-412 each contribute to the Zn(2+) site.

The protein belongs to the alkaline phosphatase family. The cofactor is Mg(2+). It depends on Zn(2+) as a cofactor.

Its subcellular location is the secreted. The enzyme catalyses streptomycin 6-phosphate + H2O = streptomycin + phosphate. Its pathway is antibiotic biosynthesis; streptomycin biosynthesis. Specifically cleaves both streptomycin-6-phosphate and, more slowly, streptomycin-3''-phosphate during the biosynthesis of streptomycin. This is Streptomycin-6-phosphate phosphatase (strK) from Streptomyces griseus.